The sequence spans 191 residues: Adenine phosphoribosyltransferase (191 aa).

Belongs to the purine/pyrimidine phosphoribosyltransferase family. As to quaternary structure, homodimer.

The protein localises to the cytoplasm. It catalyses the reaction AMP + diphosphate = 5-phospho-alpha-D-ribose 1-diphosphate + adenine. The protein operates within purine metabolism; AMP biosynthesis via salvage pathway; AMP from adenine: step 1/1. Its function is as follows. Catalyzes a salvage reaction resulting in the formation of AMP, that is energically less costly than de novo synthesis. The protein is Adenine phosphoribosyltransferase of Clavibacter sepedonicus (Clavibacter michiganensis subsp. sepedonicus).